A 501-amino-acid chain; its full sequence is Probable sucrose utilization protein SUC1 (501 aa).

The segment at residues 13–39 (CDSCSFRKVKCDMKTPCSRCVLNNLKC) is a DNA-binding region (zn(2)-C6 fungal-type).

Belongs to the MAL13 family.

It is found in the nucleus. Its function is as follows. Affects sucrose utilization and alpha-glucosidase activity. Probable transcriptional activator. The polypeptide is Probable sucrose utilization protein SUC1 (SUC1) (Candida albicans (strain SC5314 / ATCC MYA-2876) (Yeast)).